Reading from the N-terminus, the 300-residue chain is C-4 methylsterol oxidase erg25 (300 aa).

The region spanning 140–276 is the Fatty acid hydroxylase domain; sequence TLFFFLEDTW…FRWWDAVLKT (137 aa). The Histidine box-1 motif lies at 154–158; that stretch reads HRLFH. The Histidine box-2 signature appears at 167–171; sequence HKVHH. Residues 186 to 206 traverse the membrane as a helical segment; it reads PLEIILLGAGTVFVPLMWCYF. The short motif at 251 to 257 is the Histidine box-3 element; that stretch reads HHDYHHM.

It belongs to the sterol desaturase family. In terms of assembly, heterotetramer of erg25, erg26, erg27 and erg28. Erg28 acts as a scaffold to tether erg27 and other 4,4-demethylation-related enzymes, forming a demethylation enzyme complex, in the endoplasmic reticulum. The cofactor is Fe cation.

Its subcellular location is the endoplasmic reticulum membrane. The enzyme catalyses 4,4-dimethyl-5alpha-cholesta-8,24-dien-3beta-ol + 6 Fe(II)-[cytochrome b5] + 3 O2 + 5 H(+) = 4beta-methylzymosterol-4alpha-carboxylate + 6 Fe(III)-[cytochrome b5] + 4 H2O. It carries out the reaction 4alpha-methylzymosterol + 6 Fe(II)-[cytochrome b5] + 3 O2 + 5 H(+) = 4alpha-carboxyzymosterol + 6 Fe(III)-[cytochrome b5] + 4 H2O. It participates in steroid biosynthesis; zymosterol biosynthesis; zymosterol from lanosterol: step 3/6. Its pathway is steroid metabolism; ergosterol biosynthesis. C-4 methylsterol oxidase; part of the third module of ergosterol biosynthesis pathway that includes by the late steps of the pathway. Erg25 is a catalytic component of the C-4 demethylation complex that catalyzes the three-step monooxygenation required for the demethylation of 4,4-dimethyl and 4alpha-methylsterols. The third module or late pathway involves the ergosterol synthesis itself through consecutive reactions that mainly occur in the endoplasmic reticulum (ER) membrane. Firstly, the squalene synthase erg9 catalyzes the condensation of 2 farnesyl pyrophosphate moieties to form squalene, which is the precursor of all steroids. Secondly, squalene is converted into lanosterol by the consecutive action of the squalene epoxidase erg1 and the lanosterol synthase erg7. The lanosterol 14-alpha-demethylase erg11/cyp1 catalyzes C14-demethylation of lanosterol to produce 4,4'-dimethyl cholesta-8,14,24-triene-3-beta-ol. In the next steps, a complex process involving various demethylation, reduction and desaturation reactions catalyzed by the C-14 reductase erg24 and the C-4 demethylation complex erg25-erg26-erg27 leads to the production of zymosterol. Erg28 likely functions in the C-4 demethylation complex reaction by tethering erg26 and Erg27 to the endoplasmic reticulum or to facilitate interaction between these proteins. Then, the sterol 24-C-methyltransferase erg6 catalyzes the methyl transfer from S-adenosyl-methionine to the C-24 of zymosterol to form fecosterol. The C-8 sterol isomerase erg2 catalyzes the reaction which results in unsaturation at C-7 in the B ring of sterols and thus converts fecosterol to episterol. The sterol-C5-desaturases erg31 and erg32 then catalyze the introduction of a C-5 double bond in the B ring to produce 5-dehydroepisterol. The C-22 sterol desaturase erg5 further converts 5-dehydroepisterol into ergosta-5,7,22,24(28)-tetraen-3beta-ol by forming the C-22(23) double bond in the sterol side chain. Finally, ergosta-5,7,22,24(28)-tetraen-3beta-ol is substrate of the C-24(28) sterol reductase erg4 to produce ergosterol. In the genus Schizosaccharomyces, a second route exists between lanosterol and fecosterol, via the methylation of lanosterol to eburicol by erg6, followed by C14-demethylation by erg11/cyp1 and C4-demethylation by the demethylation complex erg25-erg26-erg27. In Schizosaccharomyces pombe (strain 972 / ATCC 24843) (Fission yeast), this protein is C-4 methylsterol oxidase erg25.